The chain runs to 144 residues: Phospholipase A2, membrane associated (144 aa).

An N-terminal signal peptide occupies residues Met-1–Gly-20. 7 cysteine pairs are disulfide-bonded: Cys-46–Cys-137, Cys-48–Cys-64, Cys-63–Cys-117, Cys-69–Cys-144, Cys-70–Cys-110, Cys-79–Cys-103, and Cys-97–Cys-108. The Ca(2+) site is built by His-47, Gly-49, and Gly-51. His-67 is a catalytic residue. Asp-68 contributes to the Ca(2+) binding site. Residue Asp-111 is part of the active site.

It belongs to the phospholipase A2 family. It depends on Ca(2+) as a cofactor. As to expression, expressed in various tissues including heart, kidney, liver, lung, pancreas, placenta, skeletal muscle, prostate, ovary, colon and small intestine. Not detected in lymphoid organs and brain. Expressed in platelets (at protein level).

The protein localises to the secreted. The protein resides in the cell membrane. It localises to the mitochondrion outer membrane. The enzyme catalyses a 1,2-diacyl-sn-glycero-3-phosphoethanolamine + H2O = a 1-acyl-sn-glycero-3-phosphoethanolamine + a fatty acid + H(+). It carries out the reaction 1-hexadecanoyl-2-(9Z-octadecenoyl)-sn-glycero-3-phosphoethanolamine + H2O = 1-hexadecanoyl-sn-glycero-3-phosphoethanolamine + (9Z)-octadecenoate + H(+). It catalyses the reaction 1-hexadecanoyl-2-(9Z,12Z-octadecadienoyl)-sn-glycero-3-phosphoethanolamine + H2O = 1-hexadecanoyl-sn-glycero-3-phosphoethanolamine + (9Z,12Z)-octadecadienoate + H(+). The catalysed reaction is 1-hexadecanoyl-2-(5Z,8Z,11Z,14Z-eicosatetraenoyl)-sn-glycero-3-phosphoethanolamine + H2O = 1-hexadecanoyl-sn-glycero-3-phosphoethanolamine + (5Z,8Z,11Z,14Z)-eicosatetraenoate + H(+). The enzyme catalyses N-hexadecanoyl-1,2-di-(9Z-octadecenoyl)-sn-glycero-3-phosphoethanolamine + H2O = N-hexadecanoyl-1-(9Z-octadecenoyl)-sn-glycero-3-phosphoethanolamine + (9Z)-octadecenoate + H(+). It carries out the reaction 1,2-dihexadecanoyl-sn-glycero-3-phospho-(1'-sn-glycerol) + H2O = 1-hexadecanoyl-sn-glycero-3-phospho-(1'-sn-glycerol) + hexadecanoate + H(+). It catalyses the reaction 1-hexadecanoyl-2-(9Z-octadecenoyl)-sn-glycero-3-phosphoglycerol + H2O = 1-hexadecanoyl-sn-glycero-3-phosphoglycerol + (9Z)-octadecenoate + H(+). The catalysed reaction is 1-hexadecanoyl-2-(9Z-octadecenoyl)-sn-glycero-3-phospho-(1'-sn-glycerol) + H2O = 1-hexadecanoyl-sn-glycero-3-phospho-(1'-sn-glycerol) + (9Z)-octadecenoate + H(+). The enzyme catalyses a 1,2-diacyl-sn-glycero-3-phosphocholine + H2O = a 1-acyl-sn-glycero-3-phosphocholine + a fatty acid + H(+). It carries out the reaction 1,2-dihexadecanoyl-sn-glycero-3-phosphocholine + H2O = 1-hexadecanoyl-sn-glycero-3-phosphocholine + hexadecanoate + H(+). It catalyses the reaction 1-hexadecanoyl-2-(9Z-octadecenoyl)-sn-glycero-3-phosphocholine + H2O = 1-hexadecanoyl-sn-glycero-3-phosphocholine + (9Z)-octadecenoate + H(+). The catalysed reaction is 1-hexadecanoyl-2-(9Z,12Z-octadecadienoyl)-sn-glycero-3-phosphocholine + H2O = (9Z,12Z)-octadecadienoate + 1-hexadecanoyl-sn-glycero-3-phosphocholine + H(+). The enzyme catalyses 1-hexadecanoyl-2-(4Z,7Z,10Z,13Z,16Z,19Z-docosahexaenoyl)-sn-glycero-3-phosphocholine + H2O = (4Z,7Z,10Z,13Z,16Z,19Z)-docosahexaenoate + 1-hexadecanoyl-sn-glycero-3-phosphocholine + H(+). In terms of biological role, secretory calcium-dependent phospholipase A2 that primarily targets extracellular phospholipids with implications in host antimicrobial defense, inflammatory response and tissue regeneration. Hydrolyzes the ester bond of the fatty acyl group attached at sn-2 position of phospholipids (phospholipase A2 activity) with preference for phosphatidylethanolamines and phosphatidylglycerols over phosphatidylcholines. Contributes to lipid remodeling of cellular membranes and generation of lipid mediators involved in pathogen clearance. Displays bactericidal activity against Gram-positive bacteria by directly hydrolyzing phospholipids of the bacterial membrane. Upon sterile inflammation, targets membrane phospholipids of extracellular mitochondria released from activated platelets, generating free unsaturated fatty acids such as arachidonate that is used by neighboring leukocytes to synthesize inflammatory eicosanoids such as leukotrienes. Simultaneously, by compromising mitochondrial membrane integrity, promotes the release in circulation of potent damage-associated molecular pattern molecules that activate the innate immune response. Plays a stem cell regulator role in the intestinal crypt. Within intracellular compartment mediates Paneth cell differentiation and its stem cell supporting functions by inhibiting Wnt signaling pathway in intestinal stem cell (ICS). Secreted in the intestinal lumen upon inflammation, acts in an autocrine way and promotes prostaglandin E2 synthesis that stimulates Wnt signaling pathway in ICS cells and tissue regeneration. May play a role in the biosynthesis of N-acyl ethanolamines that regulate energy metabolism and inflammation. Hydrolyzes N-acyl phosphatidylethanolamines to N-acyl lysophosphatidylethanolamines, which are further cleaved by a lysophospholipase D to release N-acyl ethanolamines. Independent of its catalytic activity, acts as a ligand for integrins. Binds to and activates integrins ITGAV:ITGB3, ITGA4:ITGB1 and ITGA5:ITGB1. Binds to a site (site 2) which is distinct from the classical ligand-binding site (site 1) and induces integrin conformational changes and enhanced ligand binding to site 1. Induces cell proliferation in an integrin-dependent manner. This is Phospholipase A2, membrane associated (PLA2G2A) from Homo sapiens (Human).